Consider the following 115-residue polypeptide: Nitrogenase-stabilizing/protective protein NifW (115 aa).

The protein belongs to the NifW family. Homotrimer; associates with NifD.

Its function is as follows. May protect the nitrogenase Fe-Mo protein from oxidative damage. This is Nitrogenase-stabilizing/protective protein NifW from Rhodopseudomonas palustris (strain BisB18).